Reading from the N-terminus, the 292-residue chain is Large ribosomal subunit protein uL4 (292 aa).

Basic and acidic residues-rich tracts occupy residues Met1–Ala33 and Lys42–Pro51. 2 disordered regions span residues Met1–Ser59 and Gly132–Ala158.

It belongs to the universal ribosomal protein uL4 family. Part of the 50S ribosomal subunit.

Functionally, one of the primary rRNA binding proteins, this protein initially binds near the 5'-end of the 23S rRNA. It is important during the early stages of 50S assembly. It makes multiple contacts with different domains of the 23S rRNA in the assembled 50S subunit and ribosome. Its function is as follows. Forms part of the polypeptide exit tunnel. This chain is Large ribosomal subunit protein uL4, found in Mycoplasmopsis pulmonis (strain UAB CTIP) (Mycoplasma pulmonis).